A 62-amino-acid polypeptide reads, in one-letter code: Large ribosomal subunit protein uL30 (62 aa).

It belongs to the universal ribosomal protein uL30 family. Part of the 50S ribosomal subunit.

The chain is Large ribosomal subunit protein uL30 from Nitrosospira multiformis (strain ATCC 25196 / NCIMB 11849 / C 71).